The sequence spans 164 residues: Respiratory growth induced protein 2 (164 aa).

It belongs to the RGI1 family.

It is found in the cytoplasm. Functionally, involved in the control of energetic metabolism and significantly contribute to cell fitness, especially under respiratory growth conditions. The polypeptide is Respiratory growth induced protein 2 (RGI2) (Saccharomyces cerevisiae (strain JAY291) (Baker's yeast)).